The following is a 361-amino-acid chain: Protein RecA (361 aa).

68–75 contributes to the ATP binding site; that stretch reads GPESSGKT. A disordered region spans residues 342–361; that stretch reads PEGAKENISAKDDVAVDTKE. The span at 344–361 shows a compositional bias: basic and acidic residues; it reads GAKENISAKDDVAVDTKE.

The protein belongs to the RecA family.

It is found in the cytoplasm. Can catalyze the hydrolysis of ATP in the presence of single-stranded DNA, the ATP-dependent uptake of single-stranded DNA by duplex DNA, and the ATP-dependent hybridization of homologous single-stranded DNAs. It interacts with LexA causing its activation and leading to its autocatalytic cleavage. In Clostridium beijerinckii (strain ATCC 51743 / NCIMB 8052) (Clostridium acetobutylicum), this protein is Protein RecA.